Here is a 73-residue protein sequence, read N- to C-terminus: Putative defensin-like protein 270 (73 aa).

The signal sequence occupies residues M1–S23. 4 disulfides stabilise this stretch: C33/C72, C39/C60, C45/C70, and C49/C71.

Belongs to the DEFL family.

The protein resides in the secreted. The polypeptide is Putative defensin-like protein 270 (Arabidopsis thaliana (Mouse-ear cress)).